The following is a 320-amino-acid chain: Endochitinase (320 aa).

A signal peptide spans 1-23 (MKRTLKVSFFILCLLPLFLGSKA). The Chitin-binding type-1 domain maps to 24-64 (EQCGSQAGGAVCPNGLCCSKFGFCGSTDPYCGDGCQSQCKS). Intrachain disulfides connect Cys-26/Cys-41, Cys-35/Cys-47, Cys-40/Cys-54, Cys-58/Cys-62, Cys-101/Cys-163, Cys-175/Cys-182, and Cys-281/Cys-313. Glu-145 acts as the Proton donor in catalysis.

It belongs to the glycosyl hydrolase 19 family. Chitinase class I subfamily.

The enzyme catalyses Random endo-hydrolysis of N-acetyl-beta-D-glucosaminide (1-&gt;4)-beta-linkages in chitin and chitodextrins.. In terms of biological role, defense against chitin-containing fungal pathogens. This is Endochitinase from Pisum sativum (Garden pea).